A 281-amino-acid chain; its full sequence is NADPH-dependent 7-cyano-7-deazaguanine reductase (281 aa).

Residue 88–90 (IES) participates in substrate binding. 90 to 91 (SK) is an NADPH binding site. The active-site Thioimide intermediate is the cysteine 189. The active-site Proton donor is aspartate 196. 228–229 (HE) lines the substrate pocket. 257 to 258 (RG) contributes to the NADPH binding site.

Belongs to the GTP cyclohydrolase I family. QueF type 2 subfamily. In terms of assembly, homodimer.

The protein localises to the cytoplasm. The catalysed reaction is 7-aminomethyl-7-carbaguanine + 2 NADP(+) = 7-cyano-7-deazaguanine + 2 NADPH + 3 H(+). It functions in the pathway tRNA modification; tRNA-queuosine biosynthesis. Functionally, catalyzes the NADPH-dependent reduction of 7-cyano-7-deazaguanine (preQ0) to 7-aminomethyl-7-deazaguanine (preQ1). This is NADPH-dependent 7-cyano-7-deazaguanine reductase from Erwinia tasmaniensis (strain DSM 17950 / CFBP 7177 / CIP 109463 / NCPPB 4357 / Et1/99).